The primary structure comprises 181 residues: NADH-quinone oxidoreductase subunit I 2 (181 aa).

4Fe-4S ferredoxin-type domains follow at residues 44–74 (LNRYPDGLEKCIGCELCAWACPADAIYVEGA) and 90–119 (RVYQINYLRCIGCGLCVEACPTRALTMTND). The [4Fe-4S] cluster site is built by Cys54, Cys57, Cys60, Cys64, Cys99, Cys102, Cys105, and Cys109.

Belongs to the complex I 23 kDa subunit family. NDH-1 is composed of 14 different subunits. Subunits NuoA, H, J, K, L, M, N constitute the membrane sector of the complex. [4Fe-4S] cluster serves as cofactor.

The protein localises to the cell membrane. The enzyme catalyses a quinone + NADH + 5 H(+)(in) = a quinol + NAD(+) + 4 H(+)(out). Its function is as follows. NDH-1 shuttles electrons from NADH, via FMN and iron-sulfur (Fe-S) centers, to quinones in the respiratory chain. The immediate electron acceptor for the enzyme in this species is believed to be menaquinone. Couples the redox reaction to proton translocation (for every two electrons transferred, four hydrogen ions are translocated across the cytoplasmic membrane), and thus conserves the redox energy in a proton gradient. In Mycolicibacterium paratuberculosis (strain ATCC BAA-968 / K-10) (Mycobacterium paratuberculosis), this protein is NADH-quinone oxidoreductase subunit I 2.